The chain runs to 292 residues: uncharacterized protein (292 aa).

Residues 1–59 form the HTH lysR-type domain; the sequence is MTITQLKVFVKIAETGSFTKAGQALNMTQPAVSHAISAIEAELDVKLIIRDRRNGLMLT. The segment at residues 18–37 is a DNA-binding region (H-T-H motif); it reads FTKAGQALNMTQPAVSHAIS.

This sequence belongs to the LysR transcriptional regulatory family.

This is an uncharacterized protein from Bacillus subtilis (strain 168).